Reading from the N-terminus, the 111-residue chain is Probable 4-amino-4-deoxy-L-arabinose-phosphoundecaprenol flippase subunit ArnE (111 aa).

The next 3 helical transmembrane spans lie at 38 to 58 (LWLG…LLVL), 61 to 81 (LPVG…TLAA), and 91 to 111 (PRHW…GSAA). An EamA domain is found at 40–109 (LGLALICMGA…IISGIIILGS (70 aa)).

Belongs to the ArnE family. As to quaternary structure, heterodimer of ArnE and ArnF.

The protein resides in the cell inner membrane. It participates in bacterial outer membrane biogenesis; lipopolysaccharide biosynthesis. Functionally, translocates 4-amino-4-deoxy-L-arabinose-phosphoundecaprenol (alpha-L-Ara4N-phosphoundecaprenol) from the cytoplasmic to the periplasmic side of the inner membrane. This Salmonella paratyphi B (strain ATCC BAA-1250 / SPB7) protein is Probable 4-amino-4-deoxy-L-arabinose-phosphoundecaprenol flippase subunit ArnE.